A 362-amino-acid chain; its full sequence is Apelin receptor A (362 aa).

Topologically, residues 1–34 are extracellular; that stretch reads MEPTSEYTETYDYYDTGYNDSGCDYSEWEPSYSL. Asn19 carries N-linked (GlcNAc...) asparagine glycosylation. Intrachain disulfides connect Cys23-Cys286 and Cys105-Cys184. A helical transmembrane segment spans residues 35-55; the sequence is IPVLYMLIFILGLSGNGVVIF. Over 56 to 73 the chain is Cytoplasmic; the sequence is TVWRAKSKRRAADVYIGN. A helical transmembrane segment spans residues 74 to 94; that stretch reads LALADLTFVITLPLWAVYTAL. Topologically, residues 95–106 are extracellular; sequence GYHWPFGVALCK. A helical transmembrane segment spans residues 107–127; it reads ISSYVVLVNMYASVFCLTCLS. Residues 128-149 lie on the Cytoplasmic side of the membrane; sequence FDRYLAIVHSLSSGRLRSRATM. The helical transmembrane segment at 150–170 threads the bilayer; sequence LASLGAIWFLSCLLAVPTLLF. The Extracellular segment spans residues 171 to 211; that stretch reads RTTVDDTGSNRTTCAMDFSLVTLNQDHESLWIAGLSLSSSA. An N-linked (GlcNAc...) asparagine glycan is attached at Asn180. The helical transmembrane segment at 212–232 threads the bilayer; sequence LGFLLPFLAMTVCYCFIGCTV. At 233–248 the chain is on the cytoplasmic side; it reads TRHFSHLRKEDQKKRR. Residues 249-269 form a helical membrane-spanning segment; it reads LLKIITTLVVVFAFCWTPFHV. The Extracellular portion of the chain corresponds to 270–284; that stretch reads LKSMDALSYLDLAPN. The helical transmembrane segment at 285-305 threads the bilayer; sequence SCGFLHFLLLAHPYATCLAYV. At 306–362 the chain is on the cytoplasmic side; sequence NSCLNPFLYAFFDLRFRSQCLCLLNLKKAMHGHMSSMSSTLSAQTQKSEVQSLATKV.

The protein belongs to the G-protein coupled receptor 1 family. In terms of tissue distribution, first expressed before epiboly in dorsal precursors. During epiboly, expressed in the enveloping layer, yolk syncytial layer and migrating mesendoderm. During segmentation stages, expressed in epithelial structures such as adaxial cells, border cells of the newly formed somites, developing lens, otic vesicles and venous vasculature.

The protein localises to the cell membrane. Its function is as follows. G protein-coupled receptor for peptide hormones apelin (apln) and apelin receptor early endogenous ligand (apela), that plays a role in the regulation of normal cardiovascular function and fluid homeostasis. When acting as apelin receptor, activates both G(i) protein pathway that inhibits adenylate cyclase activity, and the beta-arrestin pathway that promotes internalization of the receptor. Also functions as mechanoreceptor that is activated by pathological stimuli in a G-protein-independent fashion to induce beta-arrestin signaling, hence eliciting cardiac hypertrophy. However, the presence of apelin ligand blunts cardiac hypertrophic induction from APLNR/APJ on response to pathological stimuli. Plays a key role in early development such as gastrulation, blood vessels formation and heart morphogenesis by acting as a receptor for apela hormone, promoting endoderm and mesendoderm cell migration and regulating the migration of cells fated to become myocardial progenitors, respectively. Positively regulates angioblast migration toward the embryonic midline, i.e. the position of the future vessel formation, during vasculogenesis. May promote sinus venosus (SV)-derived endothelial cells migration into the developing heart to promote coronary blood vessel development. Required for cardiovascular development, particularly for intersomitic vein angiogenesis by acting as a receptor for apln hormone. Also plays a role in various processes in adults such as regulation of blood vessel formation, blood pressure, heart contractility, and heart failure. Acts redundantly with agtrl1b in heart development. In Danio rerio (Zebrafish), this protein is Apelin receptor A (aplnra).